The chain runs to 377 residues: Chaperone protein DnaJ (377 aa).

In terms of domain architecture, J spans 4 to 69 (DYYEALGVTR…QKRAAYDRFG (66 aa)). A CR-type zinc finger spans residues 135 to 213 (GKTAQIRVPT…CHGQGRVTQE (79 aa)). The Zn(2+) site is built by Cys-148, Cys-151, Cys-165, Cys-168, Cys-187, Cys-190, Cys-201, and Cys-204. CXXCXGXG motif repeat units lie at residues 148–155 (CDECSGSG), 165–172 (CTMCSGSG), 187–194 (CPGCNGRG), and 201–208 (CEKCHGQG).

It belongs to the DnaJ family. Homodimer. Requires Zn(2+) as cofactor.

Its subcellular location is the cytoplasm. Participates actively in the response to hyperosmotic and heat shock by preventing the aggregation of stress-denatured proteins and by disaggregating proteins, also in an autonomous, DnaK-independent fashion. Unfolded proteins bind initially to DnaJ; upon interaction with the DnaJ-bound protein, DnaK hydrolyzes its bound ATP, resulting in the formation of a stable complex. GrpE releases ADP from DnaK; ATP binding to DnaK triggers the release of the substrate protein, thus completing the reaction cycle. Several rounds of ATP-dependent interactions between DnaJ, DnaK and GrpE are required for fully efficient folding. Also involved, together with DnaK and GrpE, in the DNA replication of plasmids through activation of initiation proteins. This is Chaperone protein DnaJ from Brucella canis (strain ATCC 23365 / NCTC 10854 / RM-666).